A 412-amino-acid chain; its full sequence is Serine hydroxymethyltransferase (412 aa).

Residues Leu-121 and 125–127 contribute to the (6S)-5,6,7,8-tetrahydrofolate site; that span reads GHL. At Lys-230 the chain carries N6-(pyridoxal phosphate)lysine. Residue 353–355 coordinates (6S)-5,6,7,8-tetrahydrofolate; that stretch reads TPF.

This sequence belongs to the SHMT family. Homodimer. Pyridoxal 5'-phosphate serves as cofactor.

It localises to the cytoplasm. It carries out the reaction (6R)-5,10-methylene-5,6,7,8-tetrahydrofolate + glycine + H2O = (6S)-5,6,7,8-tetrahydrofolate + L-serine. It functions in the pathway one-carbon metabolism; tetrahydrofolate interconversion. It participates in amino-acid biosynthesis; glycine biosynthesis; glycine from L-serine: step 1/1. Functionally, catalyzes the reversible interconversion of serine and glycine with tetrahydrofolate (THF) serving as the one-carbon carrier. This reaction serves as the major source of one-carbon groups required for the biosynthesis of purines, thymidylate, methionine, and other important biomolecules. Also exhibits THF-independent aldolase activity toward beta-hydroxyamino acids, producing glycine and aldehydes, via a retro-aldol mechanism. The polypeptide is Serine hydroxymethyltransferase (Finegoldia magna (strain ATCC 29328 / DSM 20472 / WAL 2508) (Peptostreptococcus magnus)).